A 656-amino-acid chain; its full sequence is 1-deoxy-D-xylulose-5-phosphate synthase 1 (656 aa).

Residues histidine 73 and serine 113–alanine 115 contribute to the thiamine diphosphate site. A Mg(2+)-binding site is contributed by aspartate 144. Residues glycine 145–alanine 146, asparagine 174, tyrosine 285, and glutamate 367 contribute to the thiamine diphosphate site. Position 174 (asparagine 174) interacts with Mg(2+). Residues alanine 625–asparagine 656 form a disordered region.

It belongs to the transketolase family. DXPS subfamily. Homodimer. Requires Mg(2+) as cofactor. Thiamine diphosphate serves as cofactor.

The enzyme catalyses D-glyceraldehyde 3-phosphate + pyruvate + H(+) = 1-deoxy-D-xylulose 5-phosphate + CO2. It functions in the pathway metabolic intermediate biosynthesis; 1-deoxy-D-xylulose 5-phosphate biosynthesis; 1-deoxy-D-xylulose 5-phosphate from D-glyceraldehyde 3-phosphate and pyruvate: step 1/1. In terms of biological role, catalyzes the acyloin condensation reaction between C atoms 2 and 3 of pyruvate and glyceraldehyde 3-phosphate to yield 1-deoxy-D-xylulose-5-phosphate (DXP). This chain is 1-deoxy-D-xylulose-5-phosphate synthase 1, found in Streptomyces coelicolor (strain ATCC BAA-471 / A3(2) / M145).